The following is an 876-amino-acid chain: DNA mismatch repair protein MutS (876 aa).

Gly-626–Ser-633 lines the ATP pocket. Positions Phe-829–Pro-856 are disordered. Residues Ala-832–Pro-841 show a composition bias toward pro residues.

Belongs to the DNA mismatch repair MutS family.

In terms of biological role, this protein is involved in the repair of mismatches in DNA. It is possible that it carries out the mismatch recognition step. This protein has a weak ATPase activity. The protein is DNA mismatch repair protein MutS of Cereibacter sphaeroides (strain ATCC 17025 / ATH 2.4.3) (Rhodobacter sphaeroides).